The following is a 151-amino-acid chain: NADPH-dependent 7-cyano-7-deazaguanine reductase (151 aa).

Cys49 (thioimide intermediate) is an active-site residue. The active-site Proton donor is Asp56. Residues 71–73 (IES) and 90–91 (HE) each bind substrate.

It belongs to the GTP cyclohydrolase I family. QueF type 1 subfamily.

It is found in the cytoplasm. It catalyses the reaction 7-aminomethyl-7-carbaguanine + 2 NADP(+) = 7-cyano-7-deazaguanine + 2 NADPH + 3 H(+). It functions in the pathway tRNA modification; tRNA-queuosine biosynthesis. In terms of biological role, catalyzes the NADPH-dependent reduction of 7-cyano-7-deazaguanine (preQ0) to 7-aminomethyl-7-deazaguanine (preQ1). The protein is NADPH-dependent 7-cyano-7-deazaguanine reductase of Caulobacter vibrioides (strain ATCC 19089 / CIP 103742 / CB 15) (Caulobacter crescentus).